The following is a 716-amino-acid chain: ATP-dependent zinc metalloprotease FTSH 1, chloroplastic (716 aa).

Residues Met1 to Arg48 constitute a chloroplast transit peptide. Residues Ser49–Ala86 constitute a thylakoid transit peptide. A helical membrane pass occupies residues Phe204–Phe224. Gly302 to Thr309 is an ATP binding site. His524 contacts Zn(2+). Residue Glu525 is part of the active site. His528 and Asp605 together coordinate Zn(2+).

The protein in the N-terminal section; belongs to the AAA ATPase family. In the C-terminal section; belongs to the peptidase M41 family. As to quaternary structure, interacts with CHIP and HSP70. Heterohexamers with FTSH2, FTSH5 and FTSH8. The cofactor is Zn(2+). The FTSH1 precursor is ubiquitinated by CHIP in the cytoplasm. In terms of tissue distribution, ubiquitous.

The protein resides in the plastid. It is found in the chloroplast thylakoid membrane. In terms of biological role, part of a complex that function as an ATP-dependent zinc metallopeptidase. Involved in the thylakoid formation and in the removal of damaged D1 in the photosystem II, preventing cell death under high-intensity light conditions. The chain is ATP-dependent zinc metalloprotease FTSH 1, chloroplastic (FTSH1) from Arabidopsis thaliana (Mouse-ear cress).